A 130-amino-acid chain; its full sequence is Small ribosomal subunit protein uS9 (130 aa).

Basic and acidic residues predominate over residues 99 to 110 (KKAGFLTRDPRM). The tract at residues 99 to 130 (KKAGFLTRDPRMKERKKYGLKKARRAPQFSKR) is disordered. Positions 111–130 (KERKKYGLKKARRAPQFSKR) are enriched in basic residues.

This sequence belongs to the universal ribosomal protein uS9 family.

The protein is Small ribosomal subunit protein uS9 of Clostridium botulinum (strain Eklund 17B / Type B).